The primary structure comprises 257 residues: L-aspartate dehydrogenase (257 aa).

Residues Ala-124 and Asn-180 each contribute to the NAD(+) site. His-208 is a catalytic residue.

It belongs to the L-aspartate dehydrogenase family.

The catalysed reaction is L-aspartate + NADP(+) + H2O = oxaloacetate + NH4(+) + NADPH + H(+). The enzyme catalyses L-aspartate + NAD(+) + H2O = oxaloacetate + NH4(+) + NADH + H(+). The protein operates within cofactor biosynthesis; NAD(+) biosynthesis; iminoaspartate from L-aspartate (dehydrogenase route): step 1/1. Specifically catalyzes the NAD or NADP-dependent dehydrogenation of L-aspartate to iminoaspartate. The sequence is that of L-aspartate dehydrogenase from Methanothermobacter thermautotrophicus (strain ATCC 29096 / DSM 1053 / JCM 10044 / NBRC 100330 / Delta H) (Methanobacterium thermoautotrophicum).